Here is a 167-residue protein sequence, read N- to C-terminus: U-scoloptoxin(08)-Er5a (167 aa).

The signal sequence occupies residues 1–22 (MKTNCEFPLLCLLIVLVANVEG). Residues 23–94 (EVEDTGLKMV…KRLWRNWERR (72 aa)) constitute a propeptide that is removed on maturation. RLWRNWE repeat units follow at residues 34 to 40 (RLWRNWE), 61 to 67 (RLWRNWE), and 86 to 92 (RLWRNWE). Gln95 carries the post-translational modification Pyrrolidone carboxylic acid. One copy of the RLWRNWE 4; approximate repeat lies at 107 to 113 (ELWRNWE). A propeptide spanning residues 112–118 (WEDLKRR) is cleaved from the precursor. Residue Gln119 is modified to Pyrrolidone carboxylic acid. An RLWRNWE 5 repeat occupies 134–140 (RLWRNWE). A propeptide spanning residues 139-167 (WEDNHATLRKRSADSLSRQKRLGKERGKE) is cleaved from the precursor. A disordered region spans residues 147–167 (RKRSADSLSRQKRLGKERGKE).

Belongs to the scoloptoxin-08 family. Expressed by the venom gland.

Its subcellular location is the secreted. In Ethmostigmus rubripes (Giant centipede), this protein is U-scoloptoxin(08)-Er5a.